The chain runs to 793 residues: Ribosome biogenesis protein BOP1 homolog (793 aa).

A compositionally biased stretch (basic residues) spans 1–11; the sequence is MTKKLTLKRKG. The tract at residues 1 to 168 is disordered; sequence MTKKLTLKRK…DSDTSDEEDI (168 aa). Acidic residues-rich tracts occupy residues 44-53, 60-72, and 83-116; these read EDTTDDEGID, SSED…DEEG, and SSEE…DGDE. Residues 117-129 are compositionally biased toward basic and acidic residues; it reads EKPTTSKQNKSED. The span at 133-143 shows a compositional bias: polar residues; that stretch reads SSKVSKKTQPP. A compositionally biased stretch (basic and acidic residues) spans 146–161; the sequence is DLVKRDPSHPEYHDSD. 7 WD repeats span residues 454–495, 497–535, 579–621, 624–662, 665–704, 708–747, and 763–793; these read GHTD…RTIE, EDVV…KVLV, NHFK…SQIP, KSKG…LVKK, TNSK…KPYQ, LHRN…DLLQ, and REDF…RLYT.

This sequence belongs to the WD repeat BOP1/ERB1 family.

It is found in the nucleus. It localises to the nucleolus. The protein resides in the nucleoplasm. In terms of biological role, required for maturation of ribosomal RNAs and formation of the large ribosomal subunit. The sequence is that of Ribosome biogenesis protein BOP1 homolog from Drosophila ananassae (Fruit fly).